The primary structure comprises 158 residues: Osmosensory protein A (158 aa).

Position 2 is a phosphothreonine; by PknD (T2). The STAS domain maps to A28–L139.

It belongs to the anti-sigma-factor antagonist family. Interacts with Rv2638. Phosphorylation abolishes binding to Rv2638. Phosphorylated on Thr-2 by the serine/threonine-protein kinase PknD. Also phosphorylated to a lesser extent by PknB and PknE. Dephosphorylated by PstP.

Its activity is regulated as follows. Regulated by PknD under osmotic stress. Part of a signaling pathway that enables adaptation to osmotic stress through cell wall remodeling and virulence factor production. Unphosphorylated OprA forms a complex with the anti-anti-sigma-factor paralog Rv2638 that dissociates on OprA phosphorylation by PknD. Phosphorylation of OprA may stimulate the release of SigF from an inhibitory complex and enable the transcription of osmotically regulated genes, such as oprA and the ESX-1-associated virulence factor espA. The protein is Osmosensory protein A of Mycobacterium tuberculosis (strain ATCC 25618 / H37Rv).